A 162-amino-acid polypeptide reads, in one-letter code: Ribosome maturation factor RimP (162 aa).

The protein belongs to the RimP family.

It is found in the cytoplasm. In terms of biological role, required for maturation of 30S ribosomal subunits. In Beutenbergia cavernae (strain ATCC BAA-8 / DSM 12333 / CCUG 43141 / JCM 11478 / NBRC 16432 / NCIMB 13614 / HKI 0122), this protein is Ribosome maturation factor RimP.